Here is a 256-residue protein sequence, read N- to C-terminus: UPF0246 protein HCH_04801 (256 aa).

Belongs to the UPF0246 family.

This chain is UPF0246 protein HCH_04801, found in Hahella chejuensis (strain KCTC 2396).